The chain runs to 120 residues: Large-conductance mechanosensitive channel (120 aa).

2 consecutive transmembrane segments (helical) span residues 7–27 and 64–84; these read EFAL…GAAF and GLFI…FIFV.

Belongs to the MscL family. As to quaternary structure, homopentamer.

The protein localises to the cell membrane. Its function is as follows. Channel that opens in response to stretch forces in the membrane lipid bilayer. May participate in the regulation of osmotic pressure changes within the cell. This Staphylococcus aureus (strain Mu3 / ATCC 700698) protein is Large-conductance mechanosensitive channel.